The chain runs to 228 residues: Peptide deformylase (228 aa).

Disordered stretches follow at residues 1–28 (MSQD…EGAV) and 116–138 (GVPK…EPDR). Polar residues-rich tracts occupy residues 8-18 (TGCNTHSNTHS) and 123-133 (NKQQANNSTSC). Residues Cys-141 and His-183 each coordinate Fe cation. The active site involves Glu-184. His-187 serves as a coordination point for Fe cation.

The protein belongs to the polypeptide deformylase family. The cofactor is Fe(2+).

The enzyme catalyses N-terminal N-formyl-L-methionyl-[peptide] + H2O = N-terminal L-methionyl-[peptide] + formate. Functionally, removes the formyl group from the N-terminal Met of newly synthesized proteins. Requires at least a dipeptide for an efficient rate of reaction. N-terminal L-methionine is a prerequisite for activity but the enzyme has broad specificity at other positions. The protein is Peptide deformylase of Tropheryma whipplei (strain Twist) (Whipple's bacillus).